Reading from the N-terminus, the 243-residue chain is Putative ABC transporter arginine-binding protein 2 (243 aa).

Residues 1–19 (MKKVLIAALIAGFSLSATA) form the signal peptide.

This sequence belongs to the bacterial solute-binding protein 3 family. The complex is composed of two ATP-binding proteins (ArtP), two transmembrane proteins (ArtM and ArtQ) and two solute-binding proteins (ArtJ and ArtI).

The protein resides in the periplasm. In terms of biological role, part of the ABC transporter complex ArtPIQMJ involved in arginine transport. This Escherichia coli (strain K12) protein is Putative ABC transporter arginine-binding protein 2 (artI).